The sequence spans 234 residues: 2-C-methyl-D-erythritol 4-phosphate cytidylyltransferase (234 aa).

This sequence belongs to the IspD/TarI cytidylyltransferase family. IspD subfamily.

The catalysed reaction is 2-C-methyl-D-erythritol 4-phosphate + CTP + H(+) = 4-CDP-2-C-methyl-D-erythritol + diphosphate. The protein operates within isoprenoid biosynthesis; isopentenyl diphosphate biosynthesis via DXP pathway; isopentenyl diphosphate from 1-deoxy-D-xylulose 5-phosphate: step 2/6. Catalyzes the formation of 4-diphosphocytidyl-2-C-methyl-D-erythritol from CTP and 2-C-methyl-D-erythritol 4-phosphate (MEP). This Pseudomonas aeruginosa (strain ATCC 15692 / DSM 22644 / CIP 104116 / JCM 14847 / LMG 12228 / 1C / PRS 101 / PAO1) protein is 2-C-methyl-D-erythritol 4-phosphate cytidylyltransferase.